The following is a 197-amino-acid chain: Nucleoid occlusion factor SlmA (197 aa).

In terms of domain architecture, HTH tetR-type spans 7–67; the sequence is ISRREHILQC…GLIEFIEDSL (61 aa). The segment at residues 30–49 is a DNA-binding region (H-T-H motif); the sequence is TTAKLAAEVGVSEAALYRHF.

This sequence belongs to the nucleoid occlusion factor SlmA family. As to quaternary structure, homodimer. Interacts with FtsZ.

Its subcellular location is the cytoplasm. It localises to the nucleoid. In terms of biological role, required for nucleoid occlusion (NO) phenomenon, which prevents Z-ring formation and cell division over the nucleoid. Acts as a DNA-associated cell division inhibitor that binds simultaneously chromosomal DNA and FtsZ, and disrupts the assembly of FtsZ polymers. SlmA-DNA-binding sequences (SBS) are dispersed on non-Ter regions of the chromosome, preventing FtsZ polymerization at these regions. The protein is Nucleoid occlusion factor SlmA of Shewanella amazonensis (strain ATCC BAA-1098 / SB2B).